A 418-amino-acid polypeptide reads, in one-letter code: Tyrosine--tRNA ligase (418 aa).

Residue Tyr39 participates in L-tyrosine binding. A 'HIGH' region motif is present at residues 44-53 (CTADSLHVGS). 2 residues coordinate L-tyrosine: Tyr176 and Gln180. The short motif at 236 to 240 (KMGKT) is the 'KMSKS' region element. Lys239 contacts ATP. In terms of domain architecture, S4 RNA-binding spans 350–416 (LPLAEMMRAT…KKRHALIRVL (67 aa)).

The protein belongs to the class-I aminoacyl-tRNA synthetase family. TyrS type 1 subfamily. As to quaternary structure, homodimer.

The protein localises to the cytoplasm. The catalysed reaction is tRNA(Tyr) + L-tyrosine + ATP = L-tyrosyl-tRNA(Tyr) + AMP + diphosphate + H(+). Catalyzes the attachment of tyrosine to tRNA(Tyr) in a two-step reaction: tyrosine is first activated by ATP to form Tyr-AMP and then transferred to the acceptor end of tRNA(Tyr). The polypeptide is Tyrosine--tRNA ligase (Rhodospirillum rubrum (strain ATCC 11170 / ATH 1.1.1 / DSM 467 / LMG 4362 / NCIMB 8255 / S1)).